Reading from the N-terminus, the 288-residue chain is Peptidyl-tRNA hydrolase, chloroplastic (288 aa).

Residues 1 to 55 constitute a chloroplast transit peptide; the sequence is MKAVAFPAKIANLSFPSNCCSLFFRSPATFLSPALPCRKLTKGIRGLEGLMSQCL. Tyr107 contacts tRNA. The active-site Proton acceptor is the His112. The tRNA site is built by Phe157, Asn159, and Asn205.

This sequence belongs to the PTH family. Monomer.

It is found in the plastid. It localises to the chloroplast stroma. It catalyses the reaction an N-acyl-L-alpha-aminoacyl-tRNA + H2O = an N-acyl-L-amino acid + a tRNA + H(+). The natural substrate for this enzyme may be peptidyl-tRNAs which drop off the ribosome during protein synthesis. The polypeptide is Peptidyl-tRNA hydrolase, chloroplastic (Arabidopsis thaliana (Mouse-ear cress)).